Consider the following 198-residue polypeptide: Probable GTP-binding protein EngB (198 aa).

One can recognise an EngB-type G domain in the interval 27 to 198 (DLPEVALAGR…ESWDTILSEL (172 aa)). Residues 35–42 (GRSNVGKS), 62–66 (GKTQL), 80–83 (DVPG), 147–150 (TKAD), and 179–181 (FSS) contribute to the GTP site. Mg(2+)-binding residues include Ser-42 and Thr-64.

The protein belongs to the TRAFAC class TrmE-Era-EngA-EngB-Septin-like GTPase superfamily. EngB GTPase family. The cofactor is Mg(2+).

In terms of biological role, necessary for normal cell division and for the maintenance of normal septation. In Streptococcus agalactiae serotype Ia (strain ATCC 27591 / A909 / CDC SS700), this protein is Probable GTP-binding protein EngB.